Consider the following 752-residue polypeptide: MAP/microtubule affinity-regulating kinase 4 (752 aa).

A disordered region spans residues 1-36; that stretch reads MSSRTALAPGNDRNSDTHGTLGSGRSSDKGPSWSSR. The Protein kinase domain occupies 59-310; the sequence is YRLLRTIGKG…LEQIMKDKWI (252 aa). Residues 65-73 and Lys-88 each bind ATP; that span reads IGKGNFAKV. Catalysis depends on Asp-181, which acts as the Proton acceptor. Phosphothreonine; by LKB1 is present on Thr-214. Positions 324–368 constitute a UBA domain; sequence EPEEDFGDTKRIEVMVGMGYTREEIKEALTNQKYNEVTATYLLLG. Positions 385-615 are disordered; that stretch reads ARVRAPSDTT…SGRPRPTTNL (231 aa). The segment covering 391-406 has biased composition (low complexity); the sequence is SDTTNGTSSSKGSSHN. Residues Ser-423 and Ser-543 each carry the phosphoserine modification. The span at 544–553 shows a compositional bias: low complexity; sequence PSSHSLAPPS. The 50-residue stretch at 703–752 folds into the KA1 domain; sequence AGGPEPLSHFEVEVCQLPRPGLRGVLFRRVAGTALAFRTLVTRISNDLEL.

It belongs to the protein kinase superfamily. CAMK Ser/Thr protein kinase family. SNF1 subfamily. Interacts with MAPT/TAU. Interacts with gamma-tubulin. Interacts with ODF2. Interacts with USP9X. Interacts with YWHAQ. Interacts with NLRP3; promoting NLRP3 recruitment to microtubule organizing center (MTOC). Mg(2+) serves as cofactor. In terms of processing, ubiquitinated with 'Lys-29'- and 'Lys-33'-linked polyubiquitins which appear to impede LKB1-mediated phosphorylation. Deubiquitinated by USP9X. Post-translationally, phosphorylated at Thr-214 by STK11/LKB1 in complex with STE20-related adapter-alpha (STRADA) pseudo kinase and CAB39. Phosphorylated throughout the cell cycle. As to expression, isoform 1 and isoform 2 show similar expression patterns in the central nervous system and are present in the same subsets of neurons including pyramidal and non-pyramidal neurons in the cerebral cortex and hippocampus, cerebellar Purkinje cells, and interneurons and motor neurons in the spinal cord but not in glial cells (at protein level). Isoform 2 is the major isoform in brain and cerebellum. Also expressed in spleen, liver, small intestine, colon, kidney, tongue, testis and lung. Isoform 1 and isoform 2 are expressed at similar levels in heart.

It localises to the cytoplasm. The protein localises to the cytoskeleton. Its subcellular location is the microtubule organizing center. The protein resides in the centrosome. It is found in the cilium axoneme. It localises to the cilium basal body. The protein localises to the cell projection. Its subcellular location is the dendrite. It carries out the reaction L-seryl-[protein] + ATP = O-phospho-L-seryl-[protein] + ADP + H(+). The enzyme catalyses L-threonyl-[protein] + ATP = O-phospho-L-threonyl-[protein] + ADP + H(+). With respect to regulation, activated by phosphorylation on Thr-214. In terms of biological role, serine/threonine-protein kinase. Phosphorylates the microtubule-associated protein MAPT/TAU. Also phosphorylates the microtubule-associated proteins MAP2 and MAP4. Involved in regulation of the microtubule network, causing reorganization of microtubules into bundles. Required for the initiation of axoneme extension during cilium assembly. Regulates the centrosomal location of ODF2 and phosphorylates ODF2 in vitro. Plays a role in cell cycle progression, specifically in the G1/S checkpoint. Reduces neuronal cell survival. Plays a role in energy homeostasis by regulating satiety and metabolic rate. Promotes adipogenesis by activating JNK1 and inhibiting the p38MAPK pathway, and triggers apoptosis by activating the JNK1 pathway. Phosphorylates mTORC1 complex member RPTOR and acts as a negative regulator of the mTORC1 complex, probably due to disruption of the interaction between phosphorylated RPTOR and the RRAGA/RRAGC heterodimer which is required for mTORC1 activation. Involved in NLRP3 positioning along microtubules by mediating NLRP3 recruitment to microtubule organizing center (MTOC) upon inflammasome activation. In Mus musculus (Mouse), this protein is MAP/microtubule affinity-regulating kinase 4.